We begin with the raw amino-acid sequence, 137 residues long: Lysozyme (137 aa).

A signal peptide spans 1-18 (MQKLIIFALVVLCVGSEA). A C-type lysozyme domain is found at 19 to 137 (KTFTRCGLVH…QGSLPDISSC (119 aa)). Cystine bridges form between Cys-24–Cys-137, Cys-45–Cys-127, Cys-79–Cys-93, and Cys-89–Cys-107. Residues Glu-50 and Asp-67 contribute to the active site.

This sequence belongs to the glycosyl hydrolase 22 family.

It carries out the reaction Hydrolysis of (1-&gt;4)-beta-linkages between N-acetylmuramic acid and N-acetyl-D-glucosamine residues in a peptidoglycan and between N-acetyl-D-glucosamine residues in chitodextrins.. Lysozymes have primarily a bacteriolytic function; those in tissues and body fluids are associated with the monocyte-macrophage system and enhance the activity of immunoagents. Active against E.coli and M.luteus. The chain is Lysozyme from Bombyx mori (Silk moth).